Reading from the N-terminus, the 200-residue chain is MIKLTKRQEQVLQLIREHIEETGYPPTRAEISNRLGFRSANAAEEHLKALAKKGAIEMVPGASRGIRLPASETQNQGIPIVGQVAAGYPILAQENIEEYCELPPSFFTPSADYFLRVKGMSMKDVGILDGDLLAVHRTTDIHNGQIVVARIGDEVTVKRFQRQKNKVLLLPENEEFEPIEVNLSQQPLDIEGLGVGVIRR.

The H-T-H motif DNA-binding region spans 28–48 (RAEISNRLGFRSANAAEEHLK). Active-site for autocatalytic cleavage activity residues include S121 and K158.

The protein belongs to the peptidase S24 family. Homodimer.

The catalysed reaction is Hydrolysis of Ala-|-Gly bond in repressor LexA.. Represses a number of genes involved in the response to DNA damage (SOS response), including recA and lexA. In the presence of single-stranded DNA, RecA interacts with LexA causing an autocatalytic cleavage which disrupts the DNA-binding part of LexA, leading to derepression of the SOS regulon and eventually DNA repair. The chain is LexA repressor from Hahella chejuensis (strain KCTC 2396).